The chain runs to 108 residues: Replication restart protein PriB (108 aa).

An SSB domain is found at 11–108 (INRNQVIISG…VLHVRDTRII (98 aa)).

The protein belongs to the PriB family. In terms of assembly, homodimer. Interacts with PriA and DnaT. Component of the replication restart primosome. Primosome assembly occurs via a 'hand-off' mechanism. PriA binds to replication forks, subsequently PriB then DnaT bind; DnaT then displaces ssDNA to generate the helicase loading substrate.

Functionally, involved in the restart of stalled replication forks, which reloads the replicative helicase on sites other than the origin of replication; the PriA-PriB pathway is the major replication restart pathway. During primosome assembly it facilitates complex formation between PriA and DnaT on DNA; stabilizes PriA on DNA. Stimulates the DNA unwinding activity of PriA helicase. This Nitrosomonas europaea (strain ATCC 19718 / CIP 103999 / KCTC 2705 / NBRC 14298) protein is Replication restart protein PriB.